The following is a 227-amino-acid chain: UPF0758 protein lpg2489 (227 aa).

Residues 102-225 enclose the MPN domain; the sequence is RLSNTQQTYA…YSIFAENKWV (124 aa). Positions 173, 175, and 186 each coordinate Zn(2+). The JAMM motif signature appears at 173 to 186; sequence HNHPSGLSDASQQD.

It belongs to the UPF0758 family.

The protein is UPF0758 protein lpg2489 of Legionella pneumophila subsp. pneumophila (strain Philadelphia 1 / ATCC 33152 / DSM 7513).